A 389-amino-acid chain; its full sequence is Alcohol dehydrogenase-like 5 (389 aa).

Zn(2+)-binding residues include Cys-54, Thr-56, His-77, Cys-107, Cys-110, Cys-113, Cys-121, and Cys-186. 2 residues coordinate an alcohol: Thr-56 and His-77. Residue Thr-56 participates in NAD(+) binding. NAD(+) contacts are provided by residues 211-216, Asp-235, Lys-240, 305-307, Phe-332, and Arg-382; these read GLGAVG and LGI.

Belongs to the zinc-containing alcohol dehydrogenase family. Class-III subfamily. As to quaternary structure, homodimer. Requires Zn(2+) as cofactor.

It localises to the cytoplasm. It carries out the reaction a primary alcohol + NAD(+) = an aldehyde + NADH + H(+). The enzyme catalyses a secondary alcohol + NAD(+) = a ketone + NADH + H(+). In Arabidopsis thaliana (Mouse-ear cress), this protein is Alcohol dehydrogenase-like 5.